Here is a 276-residue protein sequence, read N- to C-terminus: Octanoyltransferase LipM (276 aa).

Positions 31–246 (GLIPPTIRFY…GFEKGLSIKL (216 aa)) constitute a BPL/LPL catalytic domain. The Acyl-thioester intermediate role is filled by Cys148.

This sequence belongs to the octanoyltransferase LipM family. In terms of assembly, monomer.

It carries out the reaction octanoyl-[ACP] + L-lysyl-[protein] = N(6)-octanoyl-L-lysyl-[protein] + holo-[ACP] + H(+). It participates in protein modification; protein lipoylation via endogenous pathway; protein N(6)-(lipoyl)lysine from octanoyl-[acyl-carrier-protein]. Its function is as follows. Catalyzes the transfer of endogenously produced octanoic acid from octanoyl-acyl-carrier-protein onto the lipoyl domain of GcvH, an intermediate carrier during protein lipoylation. This chain is Octanoyltransferase LipM, found in Halalkalibacterium halodurans (strain ATCC BAA-125 / DSM 18197 / FERM 7344 / JCM 9153 / C-125) (Bacillus halodurans).